A 329-amino-acid polypeptide reads, in one-letter code: Sex comb on midleg-like protein 1 (329 aa).

Ser-138 and Ser-238 each carry phosphoserine. The SAM domain maps to 258-325; that stretch reads WSVEAVVLFL…YYIDRLKQGK (68 aa).

The protein belongs to the SCM family.

It localises to the nucleus. Functionally, putative Polycomb group (PcG) protein. PcG proteins act by forming multiprotein complexes, which are required to maintain the transcriptionally repressive state of homeotic genes throughout development. May be involved in spermatogenesis during sexual maturation. In Hoolock hoolock (Western hoolock gibbon), this protein is Sex comb on midleg-like protein 1 (SCML1).